Here is a 354-residue protein sequence, read N- to C-terminus: Cellular communication network factor 6 (354 aa).

The N-terminal stretch at 1–23 (MRRLLFCTLLMTGLTQLCCRTQG) is a signal peptide. One can recognise an IGFBP N-terminal domain in the interval 44 to 117 (RTEVCRWPCR…RYETGVCAYL (74 aa)). Intrachain disulfides connect Cys48/Cys72, Cys52/Cys74, Cys54/Cys75, Cys61/Cys78, Cys86/Cys100, Cys92/Cys114, Cys209/Cys238, Cys219/Cys223, Cys247/Cys252, Cys268/Cys305, Cys285/Cys319, Cys296/Cys335, and Cys299/Cys337. A TSP type-1 domain is found at 208–253 (KCLVQATKWTPCSRTCGMGISNRVTNDNANCEMRKERRLCYIQPCS). Positions 268–342 (CQPTFQLPKA…TSCVCQRDCR (75 aa)) constitute a CTCK domain. N-linked (GlcNAc...) asparagine glycosylation is present at Asn308.

It belongs to the CCN family.

Its subcellular location is the secreted. The protein resides in the mitochondrion. Its function is as follows. Plays a role in mitochondrial electron transport and mitochondrial respiration. The chain is Cellular communication network factor 6 from Mus musculus (Mouse).